Reading from the N-terminus, the 914-residue chain is Probable dipeptidyl-aminopeptidase B (914 aa).

A compositionally biased stretch (acidic residues) spans 1–10; it reads MGKSEADEDA. The interval 1 to 81 is disordered; it reads MGKSEADEDA…DQPFLPSRKG (81 aa). Residues 1–89 are Cytoplasmic-facing; that stretch reads MGKSEADEDA…KGSGARARRV (89 aa). The span at 20–34 shows a compositional bias: low complexity; it reads SSSAASQTSSDSGLS. The chain crosses the membrane as a helical; Signal-anchor for type II membrane protein span at residues 90–110; the sequence is FWGLLLLCLAGWVLAFVLFLI. Residues 111–914 are Vacuolar-facing; that stretch reads QGRSGYSATS…FKRALPVFVH (804 aa). N-linked (GlcNAc...) asparagine glycosylation is found at N347 and N638. S752 (charge relay system) is an active-site residue. An N-linked (GlcNAc...) asparagine glycan is attached at N806. Active-site charge relay system residues include D829 and H862.

This sequence belongs to the peptidase S9B family.

Its subcellular location is the vacuole membrane. It catalyses the reaction Release of an N-terminal dipeptide, Xaa-Yaa-|-Zaa-, from a polypeptide, preferentially when Yaa is Pro, provided Zaa is neither Pro nor hydroxyproline.. Functionally, type IV dipeptidyl-peptidase which removes N-terminal dipeptides sequentially from polypeptides having unsubstituted N-termini provided that the penultimate residue is proline. The protein is Probable dipeptidyl-aminopeptidase B (dapB) of Aspergillus terreus (strain NIH 2624 / FGSC A1156).